Here is a 323-residue protein sequence, read N- to C-terminus: tRNA-modifying protein YgfZ (323 aa).

2 residues coordinate folate: tryptophan 29 and tryptophan 182.

It belongs to the tRNA-modifying YgfZ family.

It is found in the cytoplasm. In terms of biological role, folate-binding protein involved in regulating the level of ATP-DnaA and in the modification of some tRNAs. It is probably a key factor in regulatory networks that act via tRNA modification, such as initiation of chromosomal replication. The sequence is that of tRNA-modifying protein YgfZ from Vibrio cholerae serotype O1 (strain ATCC 39541 / Classical Ogawa 395 / O395).